The following is a 343-amino-acid chain: Twinfilin (343 aa).

2 ADF-H domains span residues Gln-4–Ile-139 and Gly-177–His-312. The tract at residues Asn-317 to Glu-343 is disordered.

It belongs to the actin-binding proteins ADF family. Twinfilin subfamily. As to quaternary structure, interacts with G-actin; ADP-actin form.

It localises to the cytoplasm. The protein resides in the cytoskeleton. Its subcellular location is the cell cortex. Its function is as follows. Actin-binding protein involved in motile and morphological processes. Inhibits actin polymerization, likely by sequestering G-actin. In Aedes aegypti (Yellowfever mosquito), this protein is Twinfilin (twf).